Reading from the N-terminus, the 124-residue chain is Small ribosomal subunit protein uS12c (124 aa).

Positions 104-124 (SGGVKDRTQRRSKYGVKKPKS) are disordered. Positions 113–124 (RRSKYGVKKPKS) are enriched in basic residues.

This sequence belongs to the universal ribosomal protein uS12 family. As to quaternary structure, part of the 30S ribosomal subunit.

It localises to the plastid. It is found in the chloroplast. Functionally, with S4 and S5 plays an important role in translational accuracy. Located at the interface of the 30S and 50S subunits. The polypeptide is Small ribosomal subunit protein uS12c (rps12) (Thalassiosira pseudonana (Marine diatom)).